Consider the following 187-residue polypeptide: ATP-dependent protease subunit HslV (187 aa).

Threonine 7 is a catalytic residue. Na(+) is bound by residues alanine 162, cysteine 165, and threonine 168.

Belongs to the peptidase T1B family. HslV subfamily. In terms of assembly, a double ring-shaped homohexamer of HslV is capped on each side by a ring-shaped HslU homohexamer. The assembly of the HslU/HslV complex is dependent on binding of ATP.

It localises to the cytoplasm. It catalyses the reaction ATP-dependent cleavage of peptide bonds with broad specificity.. Its activity is regulated as follows. Allosterically activated by HslU binding. Protease subunit of a proteasome-like degradation complex believed to be a general protein degrading machinery. In Methylococcus capsulatus (strain ATCC 33009 / NCIMB 11132 / Bath), this protein is ATP-dependent protease subunit HslV.